A 206-amino-acid chain; its full sequence is Probable N-acetyltransferase 14 (206 aa).

Positions leucine 55 to leucine 206 constitute an N-acetyltransferase domain. The helical transmembrane segment at phenylalanine 57–methionine 77 threads the bilayer.

This sequence belongs to the camello family.

The protein localises to the membrane. Probable acetyltransferase. Functionally, may act as a transcription factor regulating the expression of coproporphyrinogen oxidase by binding to a promoter regulatory element. The polypeptide is Probable N-acetyltransferase 14 (Bos taurus (Bovine)).